A 101-amino-acid chain; its full sequence is Large ribosomal subunit protein uL23 (101 aa).

Belongs to the universal ribosomal protein uL23 family. Part of the 50S ribosomal subunit. Contacts protein L29, and trigger factor when it is bound to the ribosome.

One of the early assembly proteins it binds 23S rRNA. One of the proteins that surrounds the polypeptide exit tunnel on the outside of the ribosome. Forms the main docking site for trigger factor binding to the ribosome. The protein is Large ribosomal subunit protein uL23 of Synechocystis sp. (strain ATCC 27184 / PCC 6803 / Kazusa).